A 284-amino-acid chain; its full sequence is Diaminopimelate epimerase (284 aa).

Substrate is bound by residues N13 and N70. The Proton donor role is filled by C79. Substrate is bound by residues 80–81 (GN), N167, N200, and 218–219 (ER). C227 (proton acceptor) is an active-site residue. Position 228–229 (228–229 (GT)) interacts with substrate.

This sequence belongs to the diaminopimelate epimerase family. As to quaternary structure, homodimer.

It localises to the cytoplasm. It catalyses the reaction (2S,6S)-2,6-diaminopimelate = meso-2,6-diaminopimelate. It functions in the pathway amino-acid biosynthesis; L-lysine biosynthesis via DAP pathway; DL-2,6-diaminopimelate from LL-2,6-diaminopimelate: step 1/1. Its function is as follows. Catalyzes the stereoinversion of LL-2,6-diaminopimelate (L,L-DAP) to meso-diaminopimelate (meso-DAP), a precursor of L-lysine and an essential component of the bacterial peptidoglycan. In Prochlorococcus marinus (strain NATL2A), this protein is Diaminopimelate epimerase.